The chain runs to 198 residues: Protein GrpE (198 aa).

The protein belongs to the GrpE family. In terms of assembly, homodimer.

The protein localises to the cytoplasm. In terms of biological role, participates actively in the response to hyperosmotic and heat shock by preventing the aggregation of stress-denatured proteins, in association with DnaK and GrpE. It is the nucleotide exchange factor for DnaK and may function as a thermosensor. Unfolded proteins bind initially to DnaJ; upon interaction with the DnaJ-bound protein, DnaK hydrolyzes its bound ATP, resulting in the formation of a stable complex. GrpE releases ADP from DnaK; ATP binding to DnaK triggers the release of the substrate protein, thus completing the reaction cycle. Several rounds of ATP-dependent interactions between DnaJ, DnaK and GrpE are required for fully efficient folding. The chain is Protein GrpE from Vibrio harveyi (Beneckea harveyi).